Here is a 78-residue protein sequence, read N- to C-terminus: UPF0154 protein lp_2061 (78 aa).

Residues 5 to 27 (TGIWILIVVIGVLVGLTGGFFGA) traverse the membrane as a helical segment.

It belongs to the UPF0154 family.

The protein localises to the membrane. In Lactiplantibacillus plantarum (strain ATCC BAA-793 / NCIMB 8826 / WCFS1) (Lactobacillus plantarum), this protein is UPF0154 protein lp_2061.